The primary structure comprises 240 residues: Uridylate kinase (240 aa).

13 to 16 (KLSG) is an ATP binding site. An involved in allosteric activation by GTP region spans residues 21–26 (GEQGYG). A UMP-binding site is contributed by Gly55. Residues Gly56 and Arg60 each contribute to the ATP site. UMP is bound by residues Asp75 and 137–144 (TGNPFFST). Residues Thr164, Tyr170, and Asp173 each coordinate ATP.

The protein belongs to the UMP kinase family. Homohexamer.

The protein resides in the cytoplasm. The enzyme catalyses UMP + ATP = UDP + ADP. It functions in the pathway pyrimidine metabolism; CTP biosynthesis via de novo pathway; UDP from UMP (UMPK route): step 1/1. With respect to regulation, allosterically activated by GTP. Inhibited by UTP. Functionally, catalyzes the reversible phosphorylation of UMP to UDP. In Aquifex aeolicus (strain VF5), this protein is Uridylate kinase.